Reading from the N-terminus, the 655-residue chain is Fidgetin-like protein 1 (655 aa).

Residues 289 to 313 (QQKKHSNQPQRNPGPLYGGGKKSLG) are disordered. ATP-binding positions include alanine 385 and 425-430 (GTGKTL).

Belongs to the AAA ATPase family. As to quaternary structure, hexamer. It depends on Mg(2+) as a cofactor.

Its subcellular location is the nucleus. It is found in the cytoplasm. The protein localises to the perinuclear region. It catalyses the reaction ATP + H2O = ADP + phosphate + H(+). Its function is as follows. May be involved in DNA double-strand break (DBS) repair via homologous recombination (HR). May regulate osteoblast proliferation and differentiation. This chain is Fidgetin-like protein 1 (fignl1), found in Xenopus laevis (African clawed frog).